The chain runs to 778 residues: Endonuclease MutS2 (778 aa).

Residue 328–335 participates in ATP binding; that stretch reads GPNTGGKT. In terms of domain architecture, Smr spans 703–778; it reads LDLRGKRYEE…GSGCTIANLG (76 aa).

The protein belongs to the DNA mismatch repair MutS family. MutS2 subfamily. Homodimer. Binds to stalled ribosomes, contacting rRNA.

Its function is as follows. Endonuclease that is involved in the suppression of homologous recombination and thus may have a key role in the control of bacterial genetic diversity. Acts as a ribosome collision sensor, splitting the ribosome into its 2 subunits. Detects stalled/collided 70S ribosomes which it binds and splits by an ATP-hydrolysis driven conformational change. Acts upstream of the ribosome quality control system (RQC), a ribosome-associated complex that mediates the extraction of incompletely synthesized nascent chains from stalled ribosomes and their subsequent degradation. Probably generates substrates for RQC. This Streptococcus equi subsp. equi (strain 4047) protein is Endonuclease MutS2.